A 517-amino-acid chain; its full sequence is Crotonobetaine/carnitine--CoA ligase (517 aa).

This sequence belongs to the ATP-dependent AMP-binding enzyme family.

It catalyses the reaction 4-(trimethylamino)butanoate + ATP + CoA = 4-(trimethylamino)butanoyl-CoA + AMP + diphosphate. It carries out the reaction crotonobetaine + ATP + CoA = crotonobetainyl-CoA + AMP + diphosphate. The enzyme catalyses (R)-carnitine + ATP + CoA = (R)-carnitinyl-CoA + AMP + diphosphate. Its pathway is amine and polyamine metabolism; carnitine metabolism. In terms of biological role, catalyzes the transfer of CoA to carnitine, generating the initial carnitinyl-CoA needed for the CaiB reaction cycle. Also has activity toward crotonobetaine and gamma-butyrobetaine. In Salmonella agona (strain SL483), this protein is Crotonobetaine/carnitine--CoA ligase.